The following is a 274-amino-acid chain: Malonyl-[acyl-carrier protein] O-methyltransferase (274 aa).

Belongs to the methyltransferase superfamily.

The enzyme catalyses malonyl-[ACP] + S-adenosyl-L-methionine = malonyl-[ACP] methyl ester + S-adenosyl-L-homocysteine. Its pathway is cofactor biosynthesis; biotin biosynthesis. Converts the free carboxyl group of a malonyl-thioester to its methyl ester by transfer of a methyl group from S-adenosyl-L-methionine (SAM). It allows to synthesize pimeloyl-ACP via the fatty acid synthetic pathway. This Priestia megaterium (strain DSM 319 / IMG 1521) (Bacillus megaterium) protein is Malonyl-[acyl-carrier protein] O-methyltransferase.